The sequence spans 392 residues: Phospho-N-acetylmuramoyl-pentapeptide-transferase (392 aa).

A run of 10 helical transmembrane segments spans residues 29–49 (AVLA…WVIG), 76–96 (TMGG…WFDL), 100–120 (FVWI…VDDW), 137–157 (YLWQ…CISE), 192–212 (AVSY…VIVG), 225–245 (GLAI…AYVT), 262–282 (SGEL…FLWF), 289–309 (VFMG…IAII), 314–334 (IVLA…MLQV), and 369–389 (QVVV…LSTL).

The protein belongs to the glycosyltransferase 4 family. MraY subfamily. Requires Mg(2+) as cofactor.

It is found in the cell inner membrane. It carries out the reaction UDP-N-acetyl-alpha-D-muramoyl-L-alanyl-gamma-D-glutamyl-meso-2,6-diaminopimeloyl-D-alanyl-D-alanine + di-trans,octa-cis-undecaprenyl phosphate = di-trans,octa-cis-undecaprenyl diphospho-N-acetyl-alpha-D-muramoyl-L-alanyl-D-glutamyl-meso-2,6-diaminopimeloyl-D-alanyl-D-alanine + UMP. The protein operates within cell wall biogenesis; peptidoglycan biosynthesis. Functionally, catalyzes the initial step of the lipid cycle reactions in the biosynthesis of the cell wall peptidoglycan: transfers peptidoglycan precursor phospho-MurNAc-pentapeptide from UDP-MurNAc-pentapeptide onto the lipid carrier undecaprenyl phosphate, yielding undecaprenyl-pyrophosphoryl-MurNAc-pentapeptide, known as lipid I. This Verminephrobacter eiseniae (strain EF01-2) protein is Phospho-N-acetylmuramoyl-pentapeptide-transferase.